The chain runs to 205 residues: Imidazole glycerol phosphate synthase subunit HisH (205 aa).

The region spanning 3–205 (RIALLDYGMG…LLKNFVEWNI (203 aa)) is the Glutamine amidotransferase type-1 domain. Cys-80 (nucleophile) is an active-site residue. Residues His-185 and Glu-187 contribute to the active site.

Heterodimer of HisH and HisF.

The protein localises to the cytoplasm. The catalysed reaction is 5-[(5-phospho-1-deoxy-D-ribulos-1-ylimino)methylamino]-1-(5-phospho-beta-D-ribosyl)imidazole-4-carboxamide + L-glutamine = D-erythro-1-(imidazol-4-yl)glycerol 3-phosphate + 5-amino-1-(5-phospho-beta-D-ribosyl)imidazole-4-carboxamide + L-glutamate + H(+). It carries out the reaction L-glutamine + H2O = L-glutamate + NH4(+). The protein operates within amino-acid biosynthesis; L-histidine biosynthesis; L-histidine from 5-phospho-alpha-D-ribose 1-diphosphate: step 5/9. IGPS catalyzes the conversion of PRFAR and glutamine to IGP, AICAR and glutamate. The HisH subunit catalyzes the hydrolysis of glutamine to glutamate and ammonia as part of the synthesis of IGP and AICAR. The resulting ammonia molecule is channeled to the active site of HisF. In Acinetobacter baylyi (strain ATCC 33305 / BD413 / ADP1), this protein is Imidazole glycerol phosphate synthase subunit HisH.